The sequence spans 162 residues: Protein cornichon homolog 2 (162 aa).

Over 1–10 (MAFTFAAFCY) the chain is Cytoplasmic. Residues 11 to 31 (MLTLVLCASLIFFIIWHIIAF) form a helical membrane-spanning segment. Residues 32 to 72 (DELRTDFKNPIEQGNPSRARERVKNVERICCLLRKLVVPEY) are Lumenal-facing. A helical transmembrane segment spans residues 73–93 (CIHGLFCLMFMCAAEWVTLGL). Residues 94-138 (NIPLLFYHLWRYFHRPADGSEVMFDPVSIMNVDILNYCQKEAWCK) are Cytoplasmic-facing. A helical membrane pass occupies residues 139-161 (LAFYLLSFFYYLYRVGATVRYVS). Position 162 (Ala-162) is a topological domain, lumenal.

The protein belongs to the cornichon family.

The protein resides in the membrane. Its function is as follows. Regulates the trafficking and gating properties of AMPA-selective glutamate receptors (AMPARs). The chain is Protein cornichon homolog 2 (cnih2) from Xenopus tropicalis (Western clawed frog).